Here is a 376-residue protein sequence, read N- to C-terminus: AGTVGKVIKCKAAVAWEAGKPLCIEEIEVAPPKAHEVRIKIIATAVCHSDSYTLSGSDSEGLFPVILGHEGAGIVESVGEGVTCVKAGDRVIPLYIPQCGDCNFCLNPKTNLCQKIRVTQGQGLMPDKTSRFTCKGQLLYHYMGTSTFSEYTVVADISVAKIDEAAPLDKVCLLGCGISTGYGAAVNTAKVEPGSTCAVFGLGGVGLAGIMGCKAAGATRIIGVDLNKDKFTKAKEFGATEYINPKDYDKPIQEVLVGLTDGGVDYSFECIGNVKTMRAALEACHKGWGTSVIVGVAPAGHEIATRPFQLVTGRTWKGTAFGGWKSVESVPKLVKEYMAKKLKVDEFVTHTLPFNQINESFELMHAGKSIRCVLSF.

Alanine 1 is modified (N-acetylalanine). Cysteine 47, histidine 69, cysteine 99, cysteine 102, cysteine 105, cysteine 113, and cysteine 176 together coordinate Zn(2+).

Belongs to the zinc-containing alcohol dehydrogenase family. Class-III subfamily. Homodimer. The cofactor is Zn(2+).

It is found in the cytoplasm. The enzyme catalyses a primary alcohol + NAD(+) = an aldehyde + NADH + H(+). It carries out the reaction a secondary alcohol + NAD(+) = a ketone + NADH + H(+). It catalyses the reaction S-(hydroxymethyl)glutathione + NADP(+) = S-formylglutathione + NADPH + H(+). The catalysed reaction is S-(hydroxymethyl)glutathione + NAD(+) = S-formylglutathione + NADH + H(+). The enzyme catalyses S-nitrosoglutathione + NADH + H(+) = S-(hydroxysulfenamide)glutathione + NAD(+). Class-III ADH is remarkably ineffective in oxidizing ethanol, but it readily catalyzes the oxidation of long-chain primary alcohols and the oxidation of S-(hydroxymethyl) glutathione. Also acts as a S-nitroso-glutathione reductase by catalyzing the NADH-dependent reduction of S-nitrosoglutathione, thereby regulating protein S-nitrosylation. This Scyliorhinus canicula (Small-spotted catshark) protein is Alcohol dehydrogenase class-3.